The chain runs to 46 residues: Esculentin-1 (46 aa).

C40 and C46 are disulfide-bonded.

It belongs to the frog skin active peptide (FSAP) family. Brevinin subfamily. As to expression, expressed by the skin glands.

The protein resides in the secreted. Its function is as follows. Shows antibacterial activity against representative Gram-negative and Gram-positive bacterial species, and hemolytic activity. The chain is Esculentin-1 from Pelophylax lessonae (Pool frog).